Reading from the N-terminus, the 75-residue chain is Translational regulator CsrA (75 aa).

Belongs to the CsrA/RsmA family. As to quaternary structure, homodimer; the beta-strands of each monomer intercalate to form a hydrophobic core, while the alpha-helices form wings that extend away from the core.

The protein resides in the cytoplasm. Its function is as follows. A translational regulator that binds mRNA to regulate translation initiation and/or mRNA stability. Usually binds in the 5'-UTR at or near the Shine-Dalgarno sequence preventing ribosome-binding, thus repressing translation. Its main target seems to be the major flagellin gene, while its function is anatagonized by FliW. The sequence is that of Translational regulator CsrA from Thermosipho melanesiensis (strain DSM 12029 / CIP 104789 / BI429).